Consider the following 618-residue polypeptide: 1-deoxy-D-xylulose-5-phosphate synthase (618 aa).

Residues H70 and 111–113 (GHS) contribute to the thiamine diphosphate site. D142 lines the Mg(2+) pocket. Residues 143–144 (GS), N171, Y278, and E360 contribute to the thiamine diphosphate site. Residue N171 coordinates Mg(2+).

Belongs to the transketolase family. DXPS subfamily. As to quaternary structure, homodimer. Mg(2+) serves as cofactor. The cofactor is thiamine diphosphate.

It catalyses the reaction D-glyceraldehyde 3-phosphate + pyruvate + H(+) = 1-deoxy-D-xylulose 5-phosphate + CO2. It participates in metabolic intermediate biosynthesis; 1-deoxy-D-xylulose 5-phosphate biosynthesis; 1-deoxy-D-xylulose 5-phosphate from D-glyceraldehyde 3-phosphate and pyruvate: step 1/1. In terms of biological role, catalyzes the acyloin condensation reaction between C atoms 2 and 3 of pyruvate and glyceraldehyde 3-phosphate to yield 1-deoxy-D-xylulose-5-phosphate (DXP). The polypeptide is 1-deoxy-D-xylulose-5-phosphate synthase (Helicobacter pylori (strain ATCC 700392 / 26695) (Campylobacter pylori)).